A 464-amino-acid polypeptide reads, in one-letter code: Soluble pyridine nucleotide transhydrogenase (464 aa).

35 to 44 (DNRPLVGGNC) provides a ligand contact to FAD.

It belongs to the class-I pyridine nucleotide-disulfide oxidoreductase family. It depends on FAD as a cofactor.

It is found in the cytoplasm. The catalysed reaction is NAD(+) + NADPH = NADH + NADP(+). Functionally, conversion of NADPH, generated by peripheral catabolic pathways, to NADH, which can enter the respiratory chain for energy generation. The polypeptide is Soluble pyridine nucleotide transhydrogenase (Stutzerimonas stutzeri (strain A1501) (Pseudomonas stutzeri)).